We begin with the raw amino-acid sequence, 578 residues long: Cytochrome P450 monooxygenase fsoE (578 aa).

The helical transmembrane segment at L28 to W48 threads the bilayer. Heme is bound at residue C517.

The protein belongs to the cytochrome P450 family. Heme serves as cofactor.

It is found in the membrane. The enzyme catalyses 3-O-(beta-D-glucopyranosyl)-isomotiol + 2 reduced [NADPH--hemoprotein reductase] + 2 O2 = 2-deacetoxyfuscoatroside + 2 oxidized [NADPH--hemoprotein reductase] + 2 H2O + 3 H(+). It carries out the reaction 3-O-(beta-D-glucopyranosyl)-2alpha-hydroxyisomotiol + 2 reduced [NADPH--hemoprotein reductase] + 2 O2 = 2-deacetylfuscoatroside + 2 oxidized [NADPH--hemoprotein reductase] + 2 H2O + 3 H(+). It catalyses the reaction 3-O-(beta-D-glucopyranosyl)-2alpha-acetoxyisomotiol + 2 reduced [NADPH--hemoprotein reductase] + 2 O2 = fuscoatroside + 2 oxidized [NADPH--hemoprotein reductase] + 2 H2O + 3 H(+). The catalysed reaction is isomotiol + reduced [NADPH--hemoprotein reductase] + O2 = 19beta-hydroxyisomotiol + oxidized [NADPH--hemoprotein reductase] + H2O + H(+). The enzyme catalyses 2alpha-hydroxyisomotiol + reduced [NADPH--hemoprotein reductase] + O2 = 2alpha,19beta-dihydroxyisomotiol + oxidized [NADPH--hemoprotein reductase] + H2O + H(+). It carries out the reaction 2alpha,19beta-dihydroxyisomotiol + reduced [NADPH--hemoprotein reductase] + O2 = 2alpha-hydroxyismotiol-19-one + oxidized [NADPH--hemoprotein reductase] + 2 H2O + H(+). It catalyses the reaction 2alpha-hydroxyismotiol-19-one + 2 reduced [NADPH--hemoprotein reductase] + O2 = 2-deacetyl,3-deglucopyranosyl-fuscoatroside + 2 oxidized [NADPH--hemoprotein reductase] + H2O + 3 H(+). Its pathway is secondary metabolite biosynthesis; terpenoid biosynthesis. Cytochrome P450 monooxygenase; part of the gene cluster that mediates the biosynthesis of the enfumafungin-type antibiotic, fuscoatroside. Within the pathway, fsoE catalyzes the oxidative cleavage of the c19-C20 bond within the E-ring, resulting in the formation of a carboxyl group and a methyl group. FsoE exhibits preferential substrate selectivity toward glycoside substrates over their aglycones. The fuscoatroside biosynthesis is initiated by the cyclization of 2,3(S)-oxidosqualene through FsoA's terpene cyclase (TC) domain, leading to the formation of the fernane skeleton isomotiol, harboring a fernane triterpene skeleton with a C8-C9 double bond. Subsequently, C2-alpha-hydroxylation mediated by fsoD results in the production of 2-alpha-hydroxy-isomotiol, which is further acetylated by fsoF. The glycosyltransferase (GT) domain of FsoA may convert isomotiol, 2-alpha-hydroxy-isomotiol, and the acetylated derivative of 2-alpha-hydroxy-isomotiol into their corresponding glycosides 3-O-(beta-D-glucopyranosyl)-isomotiol, 3-O-(beta-D-glucopyranosyl)-2-alpha-hydroxy-isomotiol, and 3-O-(beta-D-glucopyranosyl)-2-alpha-acetoxy-isomotiol, which then undergo oxidative cleavage under the action of fsoE to form s 2-deacetoxy-fuscoatroside, 2-deacetyl-fuscoatroside, and fuscoatroside, respectively. Although hydroxylation followed by acetylation of 3-O-(beta-D-glucopyranosyl)-isomotiol and 2-deacetoxy-fuscoatroside by fsoD and fsoF could not be ruled out, this process is likely to occur with difficulty due to bulky steric hindrance caused by the presence of a glycan at C3 in these compounds. Interestingly, fsoE can also utilize the aglycones isomotiol and 2-alpha-hydroxy-isomotiol as substrates to generate 19-beta-hydroxy-isomotiol and 2-alpha,19-beta-dihydroxy-isomotiol, respectively. These reactions occur with lower efficiency. Finally, fsoE can further convert 2-alpha,19-beta-dihydroxy-isomotiol into 2-alpha-hydroxy-ismotiol-19-one and 2-alpha-hydroxy-ismotiol-19-one into 2-deacetyl-3-deglucopyranosyl-fuscoatroside. The sequence is that of Cytochrome P450 monooxygenase fsoE from Humicola fuscoatra.